The following is a 483-amino-acid chain: Wax ester synthase/diacylglycerol acyltransferase 10 (483 aa).

Residues 1-203 (MTKEEVEEEP…SINAVYYAVR (203 aa)) are Cytoplasmic-facing. The active-site Proton acceptor is His143. The helical transmembrane segment at 204-222 (LIWNTIVDLLLLWATSLFF) threads the bilayer. At 223 to 483 (KDTETPISEG…MKDTLSGKSD (261 aa)) the chain is on the lumenal side. N-linked (GlcNAc...) asparagine glycosylation is found at Asn394 and Asn399.

In the N-terminal section; belongs to the long-chain O-acyltransferase family. Mostly expressed in roots.

The protein localises to the cell membrane. It localises to the endoplasmic reticulum membrane. It catalyses the reaction an acyl-CoA + a 1,2-diacyl-sn-glycerol = a triacyl-sn-glycerol + CoA. The catalysed reaction is a long chain fatty alcohol + a fatty acyl-CoA = a wax ester + CoA. It participates in glycerolipid metabolism; triacylglycerol biosynthesis. Its pathway is lipid metabolism. Bifunctional wax ester synthase/diacylglycerol acyltransferase. Involved in cuticular wax biosynthesis. This chain is Wax ester synthase/diacylglycerol acyltransferase 10, found in Arabidopsis thaliana (Mouse-ear cress).